The sequence spans 413 residues: Aspartate aminotransferase, cytoplasmic (413 aa).

L-aspartate-binding residues include Gly39 and Trp141. Ser149 is subject to Phosphoserine. Asn195 provides a ligand contact to L-aspartate. Lys259 carries the N6-(pyridoxal phosphate)lysine modification. Arg387 contacts L-aspartate.

Belongs to the class-I pyridoxal-phosphate-dependent aminotransferase family. Homodimer. The cofactor is pyridoxal 5'-phosphate.

Its subcellular location is the cytoplasm. The catalysed reaction is L-aspartate + 2-oxoglutarate = oxaloacetate + L-glutamate. The enzyme catalyses L-cysteine + 2-oxoglutarate = 2-oxo-3-sulfanylpropanoate + L-glutamate. It carries out the reaction (2S)-2-aminobutanoate + 2-oxoglutarate = 2-oxobutanoate + L-glutamate. It catalyses the reaction 3-sulfino-L-alanine + 2-oxoglutarate = 3-sulfinopyruvate + L-glutamate. Biosynthesis of L-glutamate from L-aspartate or L-cysteine. Important regulator of levels of glutamate, the major excitatory neurotransmitter of the vertebrate central nervous system. Acts as a scavenger of glutamate in brain neuroprotection. The aspartate aminotransferase activity is involved in hepatic glucose synthesis during development and in adipocyte glyceroneogenesis. Using L-cysteine as substrate, regulates levels of mercaptopyruvate, an important source of hydrogen sulfide. Mercaptopyruvate is converted into H(2)S via the action of 3-mercaptopyruvate sulfurtransferase (3MST). Hydrogen sulfide is an important synaptic modulator and neuroprotectant in the brain. In addition, catalyzes (2S)-2-aminobutanoate, a by-product in the cysteine biosynthesis pathway. In Homo sapiens (Human), this protein is Aspartate aminotransferase, cytoplasmic.